The primary structure comprises 134 residues: Ribonuclease P protein component 2 (134 aa).

Belongs to the eukaryotic/archaeal RNase P protein component 2 family. In terms of assembly, consists of a catalytic RNA component and at least 4-5 protein subunits. Forms a subcomplex with Rnp3 which stimulates the catalytic RNA.

It is found in the cytoplasm. The enzyme catalyses Endonucleolytic cleavage of RNA, removing 5'-extranucleotides from tRNA precursor.. Its function is as follows. Part of ribonuclease P, a protein complex that generates mature tRNA molecules by cleaving their 5'-ends. The protein is Ribonuclease P protein component 2 of Methanocaldococcus jannaschii (strain ATCC 43067 / DSM 2661 / JAL-1 / JCM 10045 / NBRC 100440) (Methanococcus jannaschii).